A 700-amino-acid polypeptide reads, in one-letter code: Beta-galactosidase Bga (700 aa).

Position 103 (Arg103) interacts with substrate. Cys107 contributes to the Zn(2+) binding site. A substrate-binding site is contributed by Asn141. Glu142 functions as the Proton donor in the catalytic mechanism. Residues Cys151, Cys153, and Cys156 each coordinate Zn(2+). The Nucleophile role is filled by Glu312. Substrate contacts are provided by residues Trp320 and 360 to 363 (EQYH). Over residues 648-658 (DPESLAVDDTD) the composition is skewed to acidic residues. The disordered stretch occupies residues 648-674 (DPESLAVDDTDRDGFDPMADDDKDSSA).

Belongs to the glycosyl hydrolase 42 family.

The enzyme catalyses Hydrolysis of terminal non-reducing beta-D-galactose residues in beta-D-galactosides.. With respect to regulation, requires 4 M NaCl or KCl for maximal activity. In terms of biological role, cleaves o-nitrophenyl-beta-D-galactopyranoside (ONPG) in vitro. This chain is Beta-galactosidase Bga, found in Halorubrum lacusprofundi (strain ATCC 49239 / DSM 5036 / JCM 8891 / ACAM 34).